The primary structure comprises 151 residues: Gametocyte-specific factor 1-like (151 aa).

2 CHHC U11-48K-type zinc fingers span residues 6–33 and 40–67; these read IEIC…RKKN and MASC…VNRS. Zn(2+) is bound by residues cysteine 9, histidine 15, histidine 25, cysteine 29, cysteine 43, histidine 49, histidine 59, and cysteine 63. The disordered stretch occupies residues 130–151; the sequence is QESRGGDQCPEDPQTRTRKANF.

It belongs to the UPF0224 (FAM112) family.

This chain is Gametocyte-specific factor 1-like (Gtsf1l), found in Mus musculus (Mouse).